Consider the following 449-residue polypeptide: Phosphoribosylamine--glycine ligase (449 aa).

Residues 112–325 (RELMEKYDIP…IVTLHASIAE (214 aa)) form the ATP-grasp domain. 139-202 (IDELGKPVAV…EEKCVGEEYT (64 aa)) serves as a coordination point for ATP. 3 residues coordinate Mg(2+): Gln283, Glu295, and Asn297. Residues Gln283, Glu295, and Asn297 each contribute to the Mn(2+) site.

This sequence belongs to the GARS family. Requires Mg(2+) as cofactor. It depends on Mn(2+) as a cofactor.

It carries out the reaction 5-phospho-beta-D-ribosylamine + glycine + ATP = N(1)-(5-phospho-beta-D-ribosyl)glycinamide + ADP + phosphate + H(+). The protein operates within purine metabolism; IMP biosynthesis via de novo pathway; N(1)-(5-phospho-D-ribosyl)glycinamide from 5-phospho-alpha-D-ribose 1-diphosphate: step 2/2. The chain is Phosphoribosylamine--glycine ligase from Methanopyrus kandleri (strain AV19 / DSM 6324 / JCM 9639 / NBRC 100938).